The chain runs to 217 residues: MNKLYSLFLFLFIQLSIKYNNAKVTVDTVCKRGFLIQMSGHLECKCENDLVLVNEETCEEKVLKCDEKTVNKPCGDFSKCIKIDGNPVSYACKCNLGYDMVNNVCIPNECKNVTCGNGKCILDTSNPVKTGVCSCNIGKVPNVQDQNKCSKDGETKCSLKCLKENETCKAVDGIYKCDCKDGFIIDNESSICTAFSAYNILNLSIMFILFSVCFFIM.

An N-terminal signal peptide occupies residues 1-16 (MNKLYSLFLFLFIQLS). In terms of domain architecture, EGF-like 1; truncated spans 30-59 (CKRGFLIQMSGHLECKCENDLVLVNEETCE). EGF-like domains follow at residues 61 to 106 (KVLK…NVCI), 106 to 150 (IPNE…NKCS), and 153 to 193 (GETK…SICT). Disulfide bonds link Cys-65–Cys-80, Cys-74–Cys-92, Cys-94–Cys-105, Cys-110–Cys-120, Cys-115–Cys-133, Cys-135–Cys-149, Cys-157–Cys-168, Cys-161–Cys-177, and Cys-179–Cys-192. An N-linked (GlcNAc...) asparagine glycan is attached at Asn-112. N-linked (GlcNAc...) asparagine glycans are attached at residues Asn-165 and Asn-187. A lipid anchor (GPI-anchor amidated serine) is attached at Ser-196. Positions 197–217 (AYNILNLSIMFILFSVCFFIM) are cleaved as a propeptide — removed in mature form. N-linked (GlcNAc...) asparagine glycosylation occurs at Asn-202.

It is found in the cell membrane. This is 25 kDa ookinete surface antigen from Plasmodium falciparum (isolate NF54).